The chain runs to 528 residues: Peptide chain release factor 3 (528 aa).

Positions 11 to 279 constitute a tr-type G domain; sequence EKRRTFAIIS…GLVEWAPKPL (269 aa). Residues 20-27, 88-92, and 142-145 each bind GTP; these read SHPDAGKT, DTPGH, and NKCD.

Belongs to the TRAFAC class translation factor GTPase superfamily. Classic translation factor GTPase family. PrfC subfamily.

It is found in the cytoplasm. In terms of biological role, increases the formation of ribosomal termination complexes and stimulates activities of RF-1 and RF-2. It binds guanine nucleotides and has strong preference for UGA stop codons. It may interact directly with the ribosome. The stimulation of RF-1 and RF-2 is significantly reduced by GTP and GDP, but not by GMP. This is Peptide chain release factor 3 from Psychromonas ingrahamii (strain DSM 17664 / CCUG 51855 / 37).